A 271-amino-acid chain; its full sequence is Putative phosphoenolpyruvate synthase regulatory protein (271 aa).

Residue 151–158 (GVSRSGKT) coordinates ADP.

Belongs to the pyruvate, phosphate/water dikinase regulatory protein family. PSRP subfamily.

It carries out the reaction [pyruvate, water dikinase] + ADP = [pyruvate, water dikinase]-phosphate + AMP + H(+). The enzyme catalyses [pyruvate, water dikinase]-phosphate + phosphate + H(+) = [pyruvate, water dikinase] + diphosphate. Bifunctional serine/threonine kinase and phosphorylase involved in the regulation of the phosphoenolpyruvate synthase (PEPS) by catalyzing its phosphorylation/dephosphorylation. This chain is Putative phosphoenolpyruvate synthase regulatory protein, found in Burkholderia thailandensis (strain ATCC 700388 / DSM 13276 / CCUG 48851 / CIP 106301 / E264).